A 36-amino-acid chain; its full sequence is uncharacterized protein (36 aa).

This is an uncharacterized protein from Halalkalibacterium halodurans (strain ATCC BAA-125 / DSM 18197 / FERM 7344 / JCM 9153 / C-125) (Bacillus halodurans).